Here is a 1080-residue protein sequence, read N- to C-terminus: Carbamoyl phosphate synthase large chain (1080 aa).

The segment at 1 to 403 (MPKRTDLKTI…SLQKALRGLE (403 aa)) is carboxyphosphate synthetic domain. Positions 129, 169, 175, 176, 208, 210, 215, 241, 242, 243, 285, and 299 each coordinate ATP. One can recognise an ATP-grasp 1 domain in the interval 133 to 328 (RVAMGEIGLD…IAKVAAKLAV (196 aa)). Mg(2+) contacts are provided by Q285, E299, and N301. Mn(2+)-binding residues include Q285, E299, and N301. Positions 404-554 (TGKIGLDPTG…YSTYEDECEA (151 aa)) are oligomerization domain. A carbamoyl phosphate synthetic domain region spans residues 555 to 942 (LPSNRDKIMI…AFARAQEAGG (388 aa)). Residues 679 to 876 (QQLVDKLGLK…LAKIAARCMA (198 aa)) form the ATP-grasp 2 domain. 10 residues coordinate ATP: R715, R754, L756, E761, G787, V788, H789, S790, Q830, and E847. Q830, E847, and N849 together coordinate Mg(2+). 3 residues coordinate Mn(2+): Q830, E847, and N849. Residues 943–1080 (IKAPPLGKAF…LQELHKELEA (138 aa)) form the MGS-like domain. The segment at 943–1080 (IKAPPLGKAF…LQELHKELEA (138 aa)) is allosteric domain.

This sequence belongs to the CarB family. Composed of two chains; the small (or glutamine) chain promotes the hydrolysis of glutamine to ammonia, which is used by the large (or ammonia) chain to synthesize carbamoyl phosphate. Tetramer of heterodimers (alpha,beta)4. Mg(2+) is required as a cofactor. Mn(2+) serves as cofactor.

It carries out the reaction hydrogencarbonate + L-glutamine + 2 ATP + H2O = carbamoyl phosphate + L-glutamate + 2 ADP + phosphate + 2 H(+). The catalysed reaction is hydrogencarbonate + NH4(+) + 2 ATP = carbamoyl phosphate + 2 ADP + phosphate + 2 H(+). The protein operates within amino-acid biosynthesis; L-arginine biosynthesis; carbamoyl phosphate from bicarbonate: step 1/1. It participates in pyrimidine metabolism; UMP biosynthesis via de novo pathway; (S)-dihydroorotate from bicarbonate: step 1/3. Its function is as follows. Large subunit of the glutamine-dependent carbamoyl phosphate synthetase (CPSase). CPSase catalyzes the formation of carbamoyl phosphate from the ammonia moiety of glutamine, carbonate, and phosphate donated by ATP, constituting the first step of 2 biosynthetic pathways, one leading to arginine and/or urea and the other to pyrimidine nucleotides. The large subunit (synthetase) binds the substrates ammonia (free or transferred from glutamine from the small subunit), hydrogencarbonate and ATP and carries out an ATP-coupled ligase reaction, activating hydrogencarbonate by forming carboxy phosphate which reacts with ammonia to form carbamoyl phosphate. The polypeptide is Carbamoyl phosphate synthase large chain (Xanthomonas campestris pv. campestris (strain ATCC 33913 / DSM 3586 / NCPPB 528 / LMG 568 / P 25)).